We begin with the raw amino-acid sequence, 353 residues long: Photosystem II D2 protein (353 aa).

Position 2 is an N-acetylthreonine (threonine 2). Threonine 2 carries the post-translational modification Phosphothreonine. The chain crosses the membrane as a helical span at residues 41-61 (CAYFALGGWFTGTTFVTSWYT). Histidine 118 is a chlorophyll a binding site. Residues 125–141 (GFMLRQFELARSVQLRP) traverse the membrane as a helical segment. Pheophytin a contacts are provided by glutamine 130 and asparagine 143. Residues 153–166 (VFVSVFLIYPLGQS) form a helical membrane-spanning segment. Histidine 198 is a binding site for chlorophyll a. Residues 208–228 (AALLCAIHGATVENTLFEDGD) form a helical membrane-spanning segment. Histidine 215 and phenylalanine 262 together coordinate a plastoquinone. Residue histidine 215 coordinates Fe cation. Residue histidine 269 coordinates Fe cation. Residues 279-295 (GLWMSALGVVGLALNLR) traverse the membrane as a helical segment.

Belongs to the reaction center PufL/M/PsbA/D family. PSII is composed of 1 copy each of membrane proteins PsbA, PsbB, PsbC, PsbD, PsbE, PsbF, PsbH, PsbI, PsbJ, PsbK, PsbL, PsbM, PsbT, PsbX, PsbY, PsbZ, Psb30/Ycf12, at least 3 peripheral proteins of the oxygen-evolving complex and a large number of cofactors. It forms dimeric complexes. The D1/D2 heterodimer binds P680, chlorophylls that are the primary electron donor of PSII, and subsequent electron acceptors. It shares a non-heme iron and each subunit binds pheophytin, quinone, additional chlorophylls, carotenoids and lipids. There is also a Cl(-1) ion associated with D1 and D2, which is required for oxygen evolution. The PSII complex binds additional chlorophylls, carotenoids and specific lipids. serves as cofactor.

It is found in the plastid. It localises to the chloroplast thylakoid membrane. The catalysed reaction is 2 a plastoquinone + 4 hnu + 2 H2O = 2 a plastoquinol + O2. In terms of biological role, photosystem II (PSII) is a light-driven water:plastoquinone oxidoreductase that uses light energy to abstract electrons from H(2)O, generating O(2) and a proton gradient subsequently used for ATP formation. It consists of a core antenna complex that captures photons, and an electron transfer chain that converts photonic excitation into a charge separation. The D1/D2 (PsbA/PsbD) reaction center heterodimer binds P680, the primary electron donor of PSII as well as several subsequent electron acceptors. D2 is needed for assembly of a stable PSII complex. This is Photosystem II D2 protein from Populus trichocarpa (Western balsam poplar).